Reading from the N-terminus, the 2507-residue chain is Putative neurobeachin homolog (2507 aa).

Disordered stretches follow at residues 1–109 (MEIS…PPLP), 1307–1377 (PSSP…DGGR), and 1629–1649 (SRHEEANLPEGEKNEEPEISE). Over residues 24 to 37 (PVEEGEEVNDEESN) the composition is skewed to acidic residues. Residues 1317 to 1340 (TTQKQENSENVNSETSPENGSNGK) show a composition bias toward polar residues. Residues 1360 to 1372 (DGEEEENGEEGQG) are compositionally biased toward acidic residues. Residues 1690–1798 (PSSQSACFST…AVKKVVYQLP (109 aa)) form the BEACH-type PH domain. The BEACH domain occupies 1817-2106 (MTPRQLFKHS…QLLTEAHPPR (290 aa)). 4 WD repeats span residues 2265 to 2308 (GHGD…GFIA), 2326 to 2365 (GHEASISALCVSAEHGLVVSGCEDGVILIHTTSSDLLRRI), 2405 to 2444 (LVDDKIECVTVTRDGEFAVTGAVNGRINIWRMFPLTKLYT), and 2447 to 2486 (PLNSAVRSVAVVASHRFILGGLDSGAIVVFNADFNRWHYE).

It belongs to the WD repeat neurobeachin family. As to quaternary structure, interacts with RII subunit of PKA. As to expression, expressed in vulval precursor cells and rectal epithelia in L2 and L3 larvae. In L4 larvae, expression is seen in intestinal epithelial cells.

The protein localises to the cytoplasm. The protein resides in the membrane. Its subcellular location is the nucleus. Its function is as follows. Binds to type II regulatory subunits of protein kinase A and anchors/targets them to the membrane. May anchor the kinase to cytoskeletal and/or organelle-associated proteins. Regulates endosomal traffic in polarized epithelial cells such as the vulval precursor cells and intestinal cells. Thought to act as a negative regulator of lin-12 activity in vulval precursor cells. May have a role in the internalization process from basolateral surface of polarized epithelial cells. The chain is Putative neurobeachin homolog (sel-2) from Caenorhabditis elegans.